The chain runs to 274 residues: Large ribosomal subunit protein uL2 (274 aa).

Disordered regions lie at residues 34–53 (IAPIKNSGGRNSQGKMTMRY) and 216–274 (RRPR…RRKK).

Belongs to the universal ribosomal protein uL2 family. Part of the 50S ribosomal subunit. Forms a bridge to the 30S subunit in the 70S ribosome.

Its function is as follows. One of the primary rRNA binding proteins. Required for association of the 30S and 50S subunits to form the 70S ribosome, for tRNA binding and peptide bond formation. It has been suggested to have peptidyltransferase activity; this is somewhat controversial. Makes several contacts with the 16S rRNA in the 70S ribosome. This Flavobacterium psychrophilum (strain ATCC 49511 / DSM 21280 / CIP 103535 / JIP02/86) protein is Large ribosomal subunit protein uL2.